Here is a 205-residue protein sequence, read N- to C-terminus: Protein TK0174 (205 aa).

In terms of domain architecture, AMMECR1 spans 7-201 (EWGEFLVRLA…EEYPRGPVRR (195 aa)).

This chain is Protein TK0174, found in Thermococcus kodakarensis (strain ATCC BAA-918 / JCM 12380 / KOD1) (Pyrococcus kodakaraensis (strain KOD1)).